A 489-amino-acid chain; its full sequence is Rhamnulokinase (489 aa).

13 to 17 lines the ATP pocket; the sequence is ASSGR. Cysteines 68 and 222 form a disulfide. Substrate is bound by residues Gly83 and 236–238; that span reads HDT. Asp237 acts as the Proton acceptor in catalysis. Thr259 contributes to the ATP binding site. Asn296 contacts substrate. Gln304 provides a ligand contact to ATP. A disulfide bond links Cys353 and Cys370. Gly402 is an ATP binding site. Cys413 and Cys417 are disulfide-bonded.

Belongs to the rhamnulokinase family. Monomer. Mg(2+) serves as cofactor.

The catalysed reaction is L-rhamnulose + ATP = L-rhamnulose 1-phosphate + ADP + H(+). It participates in carbohydrate degradation; L-rhamnose degradation; glycerone phosphate from L-rhamnose: step 2/3. Involved in the catabolism of L-rhamnose (6-deoxy-L-mannose). Catalyzes the transfer of the gamma-phosphate group from ATP to the 1-hydroxyl group of L-rhamnulose to yield L-rhamnulose 1-phosphate. This is Rhamnulokinase from Escherichia coli (strain 55989 / EAEC).